The sequence spans 228 residues: Ribose-5-phosphate isomerase A (228 aa).

Residues 26–29 (SGST), 81–84 (DGAD), and 94–97 (KGGG) each bind substrate. The active-site Proton acceptor is glutamate 103. Lysine 121 is a binding site for substrate.

Belongs to the ribose 5-phosphate isomerase family. Homodimer.

The catalysed reaction is aldehydo-D-ribose 5-phosphate = D-ribulose 5-phosphate. The protein operates within carbohydrate degradation; pentose phosphate pathway; D-ribose 5-phosphate from D-ribulose 5-phosphate (non-oxidative stage): step 1/1. Catalyzes the reversible conversion of ribose-5-phosphate to ribulose 5-phosphate. This is Ribose-5-phosphate isomerase A from Shouchella clausii (strain KSM-K16) (Alkalihalobacillus clausii).